A 292-amino-acid polypeptide reads, in one-letter code: Bifunctional protein FolD (292 aa).

NADP(+)-binding positions include Gly-169–Gly-171, Thr-196, and Val-237.

It belongs to the tetrahydrofolate dehydrogenase/cyclohydrolase family. Homodimer.

It carries out the reaction (6R)-5,10-methylene-5,6,7,8-tetrahydrofolate + NADP(+) = (6R)-5,10-methenyltetrahydrofolate + NADPH. The catalysed reaction is (6R)-5,10-methenyltetrahydrofolate + H2O = (6R)-10-formyltetrahydrofolate + H(+). It functions in the pathway one-carbon metabolism; tetrahydrofolate interconversion. Its function is as follows. Catalyzes the oxidation of 5,10-methylenetetrahydrofolate to 5,10-methenyltetrahydrofolate and then the hydrolysis of 5,10-methenyltetrahydrofolate to 10-formyltetrahydrofolate. This chain is Bifunctional protein FolD, found in Bifidobacterium longum (strain NCC 2705).